The sequence spans 477 residues: UDP-N-acetylmuramate--L-alanine ligase (477 aa).

Residue 125–131 (GTHGKTT) participates in ATP binding.

Belongs to the MurCDEF family.

It is found in the cytoplasm. It catalyses the reaction UDP-N-acetyl-alpha-D-muramate + L-alanine + ATP = UDP-N-acetyl-alpha-D-muramoyl-L-alanine + ADP + phosphate + H(+). It functions in the pathway cell wall biogenesis; peptidoglycan biosynthesis. In terms of biological role, cell wall formation. The sequence is that of UDP-N-acetylmuramate--L-alanine ligase from Acidothermus cellulolyticus (strain ATCC 43068 / DSM 8971 / 11B).